A 384-amino-acid polypeptide reads, in one-letter code: Chaperone protein DnaJ 1 (384 aa).

Positions Asp-4 to Gly-68 constitute a J domain. The CR-type zinc-finger motif lies at Gly-133–Arg-215. Residues Cys-146, Cys-149, Cys-163, Cys-166, Cys-189, Cys-192, Cys-203, and Cys-206 each contribute to the Zn(2+) site. CXXCXGXG motif repeat units follow at residues Cys-146–Gly-153, Cys-163–Gly-170, Cys-189–Gly-196, and Cys-203–Gly-210.

The protein belongs to the DnaJ family. Homodimer. Zn(2+) serves as cofactor.

The protein localises to the cytoplasm. Its function is as follows. Participates actively in the response to hyperosmotic and heat shock by preventing the aggregation of stress-denatured proteins and by disaggregating proteins, also in an autonomous, DnaK-independent fashion. Unfolded proteins bind initially to DnaJ; upon interaction with the DnaJ-bound protein, DnaK hydrolyzes its bound ATP, resulting in the formation of a stable complex. GrpE releases ADP from DnaK; ATP binding to DnaK triggers the release of the substrate protein, thus completing the reaction cycle. Several rounds of ATP-dependent interactions between DnaJ, DnaK and GrpE are required for fully efficient folding. Also involved, together with DnaK and GrpE, in the DNA replication of plasmids through activation of initiation proteins. In Nocardia farcinica (strain IFM 10152), this protein is Chaperone protein DnaJ 1.